Consider the following 468-residue polypeptide: UDP-N-acetylmuramate--L-alanine ligase (468 aa).

An ATP-binding site is contributed by G117 to T123.

The protein belongs to the MurCDEF family.

The protein localises to the cytoplasm. The enzyme catalyses UDP-N-acetyl-alpha-D-muramate + L-alanine + ATP = UDP-N-acetyl-alpha-D-muramoyl-L-alanine + ADP + phosphate + H(+). It functions in the pathway cell wall biogenesis; peptidoglycan biosynthesis. Cell wall formation. The chain is UDP-N-acetylmuramate--L-alanine ligase from Maricaulis maris (strain MCS10) (Caulobacter maris).